The chain runs to 486 residues: MFLTSILLSSLYLFNRILAWQGNVKHFYLFASNLLLLFIVVLYINFNTFSNSFQFNFELFNSLNPFGLSNSDISNGLLFGIDGLSLTFILLTVLLIPLTLLGNWYNINFNSNLYYTLVLAIGLVILLNFWALDYISFYILFEATLPLLFILIHIYGSSDSERASFYVLMFTLSGSLFMLLSIVVISIVLNTTNFINHNLFVLSLDLQTIIWLGLFIAIMVKTPLFPIHVWLPVVHSESPLAGSMILAGLILKLALYAILRLLLPLLCEAQILYTPMIYIISLLTIILTSLATLRQIDLKVIIAYSSISHMGIAILGVCSNTSLGIYGSIVLGVAHGFVSPALFLIVGGILYDRYHIRIVNYYKGLTTYMPQLATYIIILSFANIGTPLTGNFTGEFLSLQGGFIRNPIIGGISCISVLLAAIYQLKLTNKLTGGISSIYMHRTNDVTIREKFIMNILIISTLIIGICPQIMYNLLYWTVNNYIYII.

A run of 13 helical transmembrane segments spans residues 26-46, 76-96, 113-132, 134-156, 165-185, 209-231, 239-259, 271-291, 298-318, 329-349, 372-392, 407-427, and 452-472; these read HFYL…YINF, GLLF…VLLI, LYYT…FWAL, YISF…HIYG, FYVL…IVVI, IIWL…HVWL, PLAG…YAIL, ILYT…TSLA, LKVI…LGVC, IVLG…VGGI, LATY…TGNF, PIIG…QLKL, and FIMN…QIMY.

Belongs to the complex I subunit 4 family. Complex I is composed of 37 different subunits.

Its subcellular location is the mitochondrion membrane. The enzyme catalyses a ubiquinone + NADH + 5 H(+)(in) = a ubiquinol + NAD(+) + 4 H(+)(out). Functionally, core subunit of the mitochondrial membrane respiratory chain NADH dehydrogenase (Complex I) that is believed to belong to the minimal assembly required for catalysis. Complex I functions in the transfer of electrons from NADH to the respiratory chain. The immediate electron acceptor for the enzyme is believed to be ubiquinone. This chain is NADH-ubiquinone oxidoreductase chain 4 (ND4), found in Yarrowia lipolytica (strain CLIB 122 / E 150) (Yeast).